Consider the following 130-residue polypeptide: Methylglyoxal synthase (130 aa).

The region spanning 1–130 is the MGS-like domain; the sequence is MSKPRIALIA…DLARNMQDVC (130 aa). Substrate is bound by residues His11, Lys15, 37-40, and 57-58; these read TGTT and SG. The active-site Proton donor/acceptor is the Asp63. His90 contributes to the substrate binding site.

It belongs to the methylglyoxal synthase family.

It carries out the reaction dihydroxyacetone phosphate = methylglyoxal + phosphate. Its function is as follows. Catalyzes the formation of methylglyoxal from dihydroxyacetone phosphate. In Burkholderia cenocepacia (strain HI2424), this protein is Methylglyoxal synthase.